A 131-amino-acid chain; its full sequence is Translation initiation factor 5A (131 aa).

Hypusine is present on K36.

Belongs to the eIF-5A family.

The protein localises to the cytoplasm. Its function is as follows. Functions by promoting the formation of the first peptide bond. The polypeptide is Translation initiation factor 5A (eIF5A) (Metallosphaera sedula (strain ATCC 51363 / DSM 5348 / JCM 9185 / NBRC 15509 / TH2)).